Consider the following 155-residue polypeptide: Endoribonuclease YbeY (155 aa).

Zn(2+)-binding residues include His110, His114, and His120.

Belongs to the endoribonuclease YbeY family. Zn(2+) serves as cofactor.

The protein localises to the cytoplasm. Functionally, single strand-specific metallo-endoribonuclease involved in late-stage 70S ribosome quality control and in maturation of the 3' terminus of the 16S rRNA. The protein is Endoribonuclease YbeY of Deinococcus radiodurans (strain ATCC 13939 / DSM 20539 / JCM 16871 / CCUG 27074 / LMG 4051 / NBRC 15346 / NCIMB 9279 / VKM B-1422 / R1).